A 288-amino-acid polypeptide reads, in one-letter code: Alpha/beta hydrolase domain-containing protein 17B (288 aa).

Residues Ser170, Asp235, and His264 each act as charge relay system in the active site. Ser282 is modified (phosphoserine).

The protein belongs to the AB hydrolase superfamily. ABHD17 family. Palmitoylated on cysteine residues located in a cysteine cluster at the N-terminus which promotes membrane localization. Palmitoylation is required for post-synaptic localization and for depalmitoylating activity towards DLG4/PSD95. As to expression, expressed in brain.

It localises to the cell membrane. It is found in the recycling endosome membrane. Its subcellular location is the cell projection. The protein localises to the dendritic spine. The protein resides in the postsynaptic density membrane. The catalysed reaction is S-hexadecanoyl-L-cysteinyl-[protein] + H2O = L-cysteinyl-[protein] + hexadecanoate + H(+). Functionally, hydrolyzes fatty acids from S-acylated cysteine residues in proteins. Has depalmitoylating activity towards DLG4/PSD95. Has depalmitoylating activity towards GAP43. Has depalmitoylating activity towards MAP6. Has depalmitoylating activity towards NRAS. The polypeptide is Alpha/beta hydrolase domain-containing protein 17B (Mus musculus (Mouse)).